Reading from the N-terminus, the 123-residue chain is MADLQKIVDDLSSLTVLEAAELAKLLEEKWGVSAAAAVAVAGPAAAAAAPAEEKTEFTVVLAAAGEKKIEVIKEVRAITGLGLKEAKDLVEGAPKPVKEGVNKDEADKIKAQLEKAGAKVELK.

This sequence belongs to the bacterial ribosomal protein bL12 family. Homodimer. Part of the ribosomal stalk of the 50S ribosomal subunit. Forms a multimeric L10(L12)X complex, where L10 forms an elongated spine to which 2 to 4 L12 dimers bind in a sequential fashion. Binds GTP-bound translation factors.

In terms of biological role, forms part of the ribosomal stalk which helps the ribosome interact with GTP-bound translation factors. Is thus essential for accurate translation. The chain is Large ribosomal subunit protein bL12 from Rhodopseudomonas palustris (strain BisB18).